Here is a 255-residue protein sequence, read N- to C-terminus: Poxin (255 aa).

Belongs to the poxin family. Highly divergent.

It carries out the reaction 2',3'-cGAMP + H2O = Gp(2'-5')Ap(3') + H(+). In terms of biological role, nuclease that cleaves 2',3'-cGAMP. The polypeptide is Poxin (Bombyx mori (Silk moth)).